An 82-amino-acid chain; its full sequence is Colonization factor (82 aa).

A signal peptide spans 1–33 (MFSSLKNKLNTFKSTLSLGVFLLFSAFANQALA).

It is found in the secreted. The protein is Colonization factor (cep) of Vibrio cholerae serotype O1 (strain ATCC 39315 / El Tor Inaba N16961).